Consider the following 684-residue polypeptide: Probable metal-nicotianamine transporter YSL9 (684 aa).

The span at 1–10 (MKQERRRKRQ) shows a compositional bias: basic residues. The segment at 1–55 (MKQERRRKRQPGPPRLELVVAHPREEEMAGLDGGGDAEEGATHARGGGGAPPPWR) is disordered. Transmembrane regions (helical) follow at residues 58 to 78 (LTARGLVASLAVGAMYSVIVM), 82 to 102 (LTTGLVPTLNVSAALIAFVVL), 130 to 150 (CAVACYSIAVGGGFGSYLLGL), 174 to 194 (GIAWMTGFLLAVSFVGLLALV), 234 to 254 (VNGFTKYFAMSFFWSFFQWFY), 295 to 315 (LVNLSLLLGAILSWGVMWPLI), 341 to 361 (FICVALILGDGLYNFVKIVAL), 402 to 422 (LAFSGYLGLTFIAVIAIPMMF), 430 to 450 (VVIAYLLAPALGFCNAYGAGL), 462 to 482 (IALFILAAWAGKDSGVVAGLV), 515 to 535 (IIAQAIGTVMGCVISPLTFFL), 568 to 588 (FSALPQHCLQLCYGFFGFAVA), 612 to 632 (VPFLVGASFAIDMCIGSLIVF), and 642 to 662 (AALMVPAVASGLICGDGLWIF).

Belongs to the YSL (TC 2.A.67.2) family.

The protein resides in the membrane. Its function is as follows. May be involved in the transport of nicotianamine-chelated metals. This Oryza sativa subsp. japonica (Rice) protein is Probable metal-nicotianamine transporter YSL9 (YSL9).